The sequence spans 554 residues: Glucose-6-phosphate isomerase (554 aa).

Glu358 functions as the Proton donor in the catalytic mechanism. Active-site residues include His389 and Lys515. A compositionally biased stretch (polar residues) spans 527–540; the sequence is SDGSPQRQSDSSTD. The interval 527–554 is disordered; it reads SDGSPQRQSDSSTDALVRRYRTQRGRTG. Residues 544–554 show a composition bias toward basic residues; it reads RRYRTQRGRTG.

It belongs to the GPI family.

It is found in the cytoplasm. It catalyses the reaction alpha-D-glucose 6-phosphate = beta-D-fructose 6-phosphate. Its pathway is carbohydrate biosynthesis; gluconeogenesis. It participates in carbohydrate degradation; glycolysis; D-glyceraldehyde 3-phosphate and glycerone phosphate from D-glucose: step 2/4. Functionally, catalyzes the reversible isomerization of glucose-6-phosphate to fructose-6-phosphate. This chain is Glucose-6-phosphate isomerase, found in Mycobacterium ulcerans (strain Agy99).